Consider the following 454-residue polypeptide: NADP-specific glutamate dehydrogenase (454 aa).

An N-acetylserine modification is found at S2. K114 is a catalytic residue.

The protein belongs to the Glu/Leu/Phe/Val dehydrogenases family. In terms of assembly, homohexamer.

The catalysed reaction is L-glutamate + NADP(+) + H2O = 2-oxoglutarate + NH4(+) + NADPH + H(+). In Neurospora intermedia, this protein is NADP-specific glutamate dehydrogenase (GDH).